The following is a 700-amino-acid chain: Elongation factor G (700 aa).

Residues 8-290 (ERYRNIGISA…AVIDYLPAPT (283 aa)) form the tr-type G domain. GTP contacts are provided by residues 17–24 (AHIDAGKT), 88–92 (DTPGH), and 142–145 (NKMD).

Belongs to the TRAFAC class translation factor GTPase superfamily. Classic translation factor GTPase family. EF-G/EF-2 subfamily.

Its subcellular location is the cytoplasm. Its function is as follows. Catalyzes the GTP-dependent ribosomal translocation step during translation elongation. During this step, the ribosome changes from the pre-translocational (PRE) to the post-translocational (POST) state as the newly formed A-site-bound peptidyl-tRNA and P-site-bound deacylated tRNA move to the P and E sites, respectively. Catalyzes the coordinated movement of the two tRNA molecules, the mRNA and conformational changes in the ribosome. The polypeptide is Elongation factor G (fusA) (Pasteurella multocida (strain Pm70)).